The chain runs to 164 residues: Lipoprotein signal peptidase (164 aa).

4 helical membrane passes run 11 to 31 (YWVL…AVLS), 41 to 61 (VIPS…FSFL), 64 to 84 (QGGW…AYLV), and 92 to 112 (FAAL…GNVI). Active-site residues include Asp122 and Asp140. The chain crosses the membrane as a helical span at residues 132-152 (FYPAFNIADSFICVGAVLAVL).

It belongs to the peptidase A8 family.

Its subcellular location is the cell inner membrane. It carries out the reaction Release of signal peptides from bacterial membrane prolipoproteins. Hydrolyzes -Xaa-Yaa-Zaa-|-(S,diacylglyceryl)Cys-, in which Xaa is hydrophobic (preferably Leu), and Yaa (Ala or Ser) and Zaa (Gly or Ala) have small, neutral side chains.. Its pathway is protein modification; lipoprotein biosynthesis (signal peptide cleavage). In terms of biological role, this protein specifically catalyzes the removal of signal peptides from prolipoproteins. The chain is Lipoprotein signal peptidase from Neisseria gonorrhoeae (strain ATCC 700825 / FA 1090).